Here is a 90-residue protein sequence, read N- to C-terminus: Probable Fe(2+)-trafficking protein (90 aa).

This sequence belongs to the Fe(2+)-trafficking protein family.

Could be a mediator in iron transactions between iron acquisition and iron-requiring processes, such as synthesis and/or repair of Fe-S clusters in biosynthetic enzymes. This chain is Probable Fe(2+)-trafficking protein, found in Chromohalobacter salexigens (strain ATCC BAA-138 / DSM 3043 / CIP 106854 / NCIMB 13768 / 1H11).